The following is an 81-amino-acid chain: Defensin-like protein 144 (81 aa).

Positions 1–24 (MKNSFRFSFTVITTFIICVLVSGA) are cleaved as a signal peptide. 4 disulfides stabilise this stretch: cysteine 30/cysteine 74, cysteine 42/cysteine 61, cysteine 47/cysteine 69, and cysteine 51/cysteine 71.

Belongs to the DEFL family.

The protein localises to the secreted. The chain is Defensin-like protein 144 (LCR10) from Arabidopsis thaliana (Mouse-ear cress).